Here is an 80-residue protein sequence, read N- to C-terminus: Serine protease inhibitor Kazal-type 6 (80 aa).

Positions 1-23 (MKLSGMFLLLSLALFCFLTGVFS) are cleaved as a signal peptide. Gln24 bears the Pyrrolidone carboxylic acid mark. Residues 24–80 (QGGQVDCGEFQDPKVYCTRESNPHCGSDGQTYGNKCAFCKAIVKSGGKISLKHPGKC) form the Kazal-like domain. 3 disulfide bridges follow: Cys30-Cys62, Cys40-Cys59, and Cys48-Cys80.

Its subcellular location is the secreted. Serine protease inhibitor selective for kallikreins. Efficiently inhibits KLK4, KLK5, KLK6, KLK7, KLK12, KLK13 and KLK14. Doesn't inhibit KLK8. This Homo sapiens (Human) protein is Serine protease inhibitor Kazal-type 6 (SPINK6).